The sequence spans 1891 residues: Transcription initiation factor TFIID subunit 1 (1891 aa).

3 disordered regions span residues 1-34, 154-180, and 197-224; these read MGPGWAGLLQDKGGGSPSVVMSDTDSDEESAGGG, KLMPPPPPPPGPLKKEKDQDDITGVSE, and ASEKVDFSSSSDSESEMGPQDAAQSESK. A Protein kinase 1 domain is found at 1-435; sequence MGPGWAGLLQ…VTQLHWEDDI (435 aa). The span at 156 to 165 shows a compositional bias: pro residues; it reads MPPPPPPPGP. Over residues 197-208 the composition is skewed to low complexity; the sequence is ASEKVDFSSSSD. The residue at position 328 (serine 328) is a Phosphoserine; by autocatalysis. Residues 535–556 are disordered; it reads PDEKEEATSNSPSKENKKESSL. The tract at residues 538-997 is histone acetyltransferase (HAT); it reads KEEATSNSPS…KIPNKPTQQK (460 aa). N6-acetyllysine is present on lysine 565. Glycyl lysine isopeptide (Lys-Gly) (interchain with G-Cter in SUMO2) cross-links involve residues lysine 570 and lysine 583. Disordered stretches follow at residues 990–1009, 1128–1148, and 1254–1278; these read PNKPTQQKDDKEPQPVKKTV, MLQNKKTSSQLSREREEQERK, and RLKRNQEKEKLKGPPEKKPKKMKER. Composition is skewed to basic and acidic residues over residues 995 to 1004, 1139 to 1148, and 1254 to 1270; these read QQKDDKEPQP, SREREEQERK, and RLKRNQEKEKLKGPPEK. Positions 1216-1294 form a DNA-binding region, HMG box; sequence VRIRTTKDEE…CGACGAIGHM (79 aa). The tract at residues 1363-1650 is interaction with ASF1A and ASF1B; it reads VLKFPKQQLP…TAKEAALEEA (288 aa). The Nuclear localization signal signature appears at 1372-1379; that stretch reads PPKKKRRV. 2 consecutive Bromo domains span residues 1397–1505 and 1519–1628; these read RRRT…LKEK and LLDD…LTEY. One can recognise a Protein kinase 2 domain in the interval 1446–1891; the sequence is MDLQTLRENV…AGDTDLDSDE (446 aa). Disordered regions lie at residues 1651–1676 and 1690–1891; these read ELESLDPMTPGPYTPQPPDLYDNNTS and SNLS…DSDE. Positions 1659-1668 are enriched in pro residues; sequence TPGPYTPQPP. Residues serine 1690 and serine 1693 each carry the phosphoserine modification. The span at 1690 to 1708 shows a compositional bias: polar residues; it reads SNLSVLDIPSATSEKQLTQ. Acidic residues-rich tracts occupy residues 1711–1723 and 1741–1756; these read GDGDGDLADEEEG and EGEDDEEDAGSDEEGD. A compositionally biased stretch (low complexity) spans 1764–1778; it reads LSESGSDSDVESGSL. Phosphoserine occurs at positions 1799, 1802, and 1820. Positions 1830-1840 are enriched in polar residues; it reads KSNTQDTSFSS. Acidic residues predominate over residues 1846–1855; the sequence is VSEEEEDEEE. Serine 1847 carries the post-translational modification Phosphoserine. The segment covering 1858–1867 has biased composition (polar residues); that stretch reads SGPSVLSQVH.

It belongs to the TAF1 family. Component of the TFIID basal transcription factor complex, composed of TATA-box-binding protein TBP, and a number of TBP-associated factors (TAFs). TFIID consists of at least TBP, TAF1, TAF2, TAF3, TAF4, TAF5, TAF6, TAF7, TAF8, TAF9, TAF10, TAF11, TAF12 and TAF13. Interacts with TAF7; the interaction is direct. TAF1, when part of the TFIID complex, interacts with C-terminus of TP53. Part of a TFIID-containing RNA polymerase II pre-initiation complex that is composed of TBP and at least GTF2A1, GTF2A2, GTF2E1, GTF2E2, GTF2F1, GTF2H2, GTF2H3, GTF2H4, GTF2H5, GTF2B, TCEA1, ERCC2, ERCC3, TAF1, TAF2, TAF3, TAF4, TAF5, TAF6, TAF7, TAF8, TAF9, TAF10, TAF11, TAF12 and TAF13. Component of some MLL1/MLL complex, at least composed of the core components KMT2A/MLL1, ASH2L, HCFC1/HCF1, WDR5 and RBBP5, as well as the facultative components BACC1, CHD8, E2F6, HSP70, INO80C, KANSL1, LAS1L, MAX, MCRS1, MGA, KAT8/MOF, PELP1, PHF20, PRP31, RING2, RUVB1/TIP49A, RUVB2/TIP49B, SENP3, TAF1, TAF4, TAF6, TAF7, TAF9 and TEX10. RB1 interacts with the N-terminal domain of TAF1. Interacts with ASF1A and ASF1B. Interacts (via bromo domains) with acetylated lysine residues on the N-terminus of histone H1.4, H2A, H2B, H3 and H4 (in vitro). Mg(2+) serves as cofactor. Post-translationally, phosphorylated by casein kinase II in vitro.

The protein localises to the nucleus. It catalyses the reaction L-seryl-[protein] + ATP = O-phospho-L-seryl-[protein] + ADP + H(+). The catalysed reaction is L-threonyl-[protein] + ATP = O-phospho-L-threonyl-[protein] + ADP + H(+). The enzyme catalyses L-lysyl-[protein] + acetyl-CoA = N(6)-acetyl-L-lysyl-[protein] + CoA + H(+). Its activity is regulated as follows. Autophosphorylates on Ser residues. Inhibited by retinoblastoma tumor suppressor protein, RB1. Binding to TAF1 or CIITA inhibits the histone acetyltransferase activity. The TFIID basal transcription factor complex plays a major role in the initiation of RNA polymerase II (Pol II)-dependent transcription. TFIID recognizes and binds promoters with or without a TATA box via its subunit TBP, a TATA-box-binding protein, and promotes assembly of the pre-initiation complex (PIC). The TFIID complex consists of TBP and TBP-associated factors (TAFs), including TAF1, TAF2, TAF3, TAF4, TAF5, TAF6, TAF7, TAF8, TAF9, TAF10, TAF11, TAF12 and TAF13. TAF1 is the largest component and core scaffold of the TFIID complex, involved in nucleating complex assembly. TAF1 forms a promoter DNA binding subcomplex of TFIID, together with TAF7 and TAF2. Contains novel N- and C-terminal Ser/Thr kinase domains which can autophosphorylate or transphosphorylate other transcription factors. Phosphorylates TP53 on 'Thr-55' which leads to MDM2-mediated degradation of TP53. Phosphorylates GTF2A1 and GTF2F1 on Ser residues. Possesses DNA-binding activity. Exhibits histone acetyltransferase activity towards histones H3 and H4. Essential for progression of the G1 phase of the cell cycle. The sequence is that of Transcription initiation factor TFIID subunit 1 from Mus musculus (Mouse).